We begin with the raw amino-acid sequence, 146 residues long: Universal stress protein MT1672 (146 aa).

This sequence belongs to the universal stress protein A family.

In Mycobacterium tuberculosis (strain CDC 1551 / Oshkosh), this protein is Universal stress protein MT1672.